The primary structure comprises 191 residues: ATP synthase subunit b 2 (191 aa).

The span at 1–12 shows a compositional bias: basic and acidic residues; sequence MAESHGEAKGGE. Positions 1-31 are disordered; the sequence is MAESHGEAKGGEAKGTASAHTEAEGGHGFPP. Residues 38-60 form a helical membrane-spanning segment; sequence PSQIASLVIAFVALYVIVSRVAL.

Belongs to the ATPase B chain family. In terms of assembly, F-type ATPases have 2 components, F(1) - the catalytic core - and F(0) - the membrane proton channel. F(1) has five subunits: alpha(3), beta(3), gamma(1), delta(1), epsilon(1). F(0) has three main subunits: a(1), b(2) and c(10-14). The alpha and beta chains form an alternating ring which encloses part of the gamma chain. F(1) is attached to F(0) by a central stalk formed by the gamma and epsilon chains, while a peripheral stalk is formed by the delta and b chains.

The protein resides in the cell inner membrane. In terms of biological role, f(1)F(0) ATP synthase produces ATP from ADP in the presence of a proton or sodium gradient. F-type ATPases consist of two structural domains, F(1) containing the extramembraneous catalytic core and F(0) containing the membrane proton channel, linked together by a central stalk and a peripheral stalk. During catalysis, ATP synthesis in the catalytic domain of F(1) is coupled via a rotary mechanism of the central stalk subunits to proton translocation. Functionally, component of the F(0) channel, it forms part of the peripheral stalk, linking F(1) to F(0). The b'-subunit is a diverged and duplicated form of b found in plants and photosynthetic bacteria. This is ATP synthase subunit b 2 (atpF2) from Bradyrhizobium sp. (strain ORS 278).